A 266-amino-acid chain; its full sequence is Methylsterol monooxygenase 2-2 (266 aa).

The next 3 helical transmembrane spans lie at 24-44 (IGSF…FIFL), 71-91 (RLLL…YPVF), and 107-127 (EVSA…YWGH). The Fatty acid hydroxylase domain occupies 113–247 (LFYFIIEDFV…FVYMDWIFGT (135 aa)). The Histidine box-1 motif lies at 127-131 (HRILH). The short motif at 140–144 (HSVHH) is the Histidine box-2 element. A helical transmembrane segment spans residues 162–182 (ILFLGFATIVGPALTGPHLIT). The Histidine box-3 motif lies at 219–225 (FHDYHHR).

This sequence belongs to the sterol desaturase family. Fe cation is required as a cofactor. As to expression, expressed in shoots, roots, siliques and flowers, and, slightly, in developing seeds.

Its subcellular location is the endoplasmic reticulum membrane. It catalyses the reaction 4,4-dimethyl-5alpha-cholest-7-en-3beta-ol + 6 Fe(II)-[cytochrome b5] + 3 O2 + 5 H(+) = 4alpha-carboxy-4beta-methyl-5alpha-cholest-7-ene-3beta-ol + 6 Fe(III)-[cytochrome b5] + 4 H2O. The enzyme catalyses 24-methylidenelophenol + 6 Fe(II)-[cytochrome b5] + 3 O2 + 5 H(+) = 4alpha-carboxy-ergosta-7,24(24(1))-dien-3beta-ol + 6 Fe(III)-[cytochrome b5] + 4 H2O. In terms of biological role, non-heme iron oxygenase involved in sterols biosynthesis by catalyzing the removal of the second methyl group at the C-4 position. 24-ethylidenelophenol and 24-ethyllophenol are the preferred substrates. Together with SMO2-1, required during embryogenesis, probably by maintaining sterols and auxin homeostasis. The sequence is that of Methylsterol monooxygenase 2-2 from Arabidopsis thaliana (Mouse-ear cress).